The sequence spans 193 residues: PBAN-type neuropeptides (193 aa).

An N-terminal signal peptide occupies residues 1-19; it reads MYGAVLPGLFFIFISCVVA. Isoleucine 46 carries the post-translational modification Isoleucine amide. A leucine amide mark is found at leucine 102 and leucine 122. The disordered stretch occupies residues 124–158; the sequence is RRLADDTPATPADQEMYRPDPEQIDSRTKYFSPRL. Residues 138–151 show a composition bias toward basic and acidic residues; that stretch reads EMYRPDPEQIDSRT. A leucine amide mark is found at leucine 158 and leucine 168. The propeptide occupies 186 to 193; sequence STNKTQST.

The protein belongs to the pyrokinin family. As to expression, expressed in the mandibular, maxillary and labial neuromeres of the male and female brain-subesophageal ganglions, in the corpora cardiaca and all around the corpora allata, and at a lower level in the brain near the calyx and pedunculus of the mushroom body (at protein level). Expressed in larvae and adult of both sexes (at protein level). Expressed in corpora cardiaca (CC), corpora allata (CA) and gnathal ganglion (GNG) (at protein level). Expression in CC and CA detected in most animals, in GNG in some (at protein level). In terms of tissue distribution, expression not detected in CC, CA, AL or GNG (at protein level). As to expression, expressed in corpora cardiaca (CC), corpora allata (CA), antennal lobe (AL) and gnathal ganglion (GNG) (at protein level). Expression in CC, CA and GNG detected in most animals, expression in AL detected in few (at protein level). Expressed in corpora cardiaca (CC), corpora allata (CA), antennal lobe (AL) and gnathal ganglion (GNG) (at protein level). Expression in CC, CA and GNG detected in all animals, expression in AL detected in some (at protein level). In terms of tissue distribution, expressed in corpora cardiaca (CC), corpora allata (CA), antennal lobe (AL) and gnathal ganglion (GNG) (at protein level). Expression in CC, CA and GNG detected in most animals, expression in AL detected in some animals (at protein level).

The protein localises to the secreted. A hormone that controls sex pheromone production in female moths and pheromone responsiveness in male. The polypeptide is PBAN-type neuropeptides (Agrotis ipsilon (Black cutworm moth)).